The primary structure comprises 284 residues: Bifunctional protein FolD (284 aa).

NADP(+) contacts are provided by residues 164–166, Thr-189, and Ile-230; that span reads GRG.

The protein belongs to the tetrahydrofolate dehydrogenase/cyclohydrolase family. As to quaternary structure, homodimer.

It carries out the reaction (6R)-5,10-methylene-5,6,7,8-tetrahydrofolate + NADP(+) = (6R)-5,10-methenyltetrahydrofolate + NADPH. It catalyses the reaction (6R)-5,10-methenyltetrahydrofolate + H2O = (6R)-10-formyltetrahydrofolate + H(+). The protein operates within one-carbon metabolism; tetrahydrofolate interconversion. In terms of biological role, catalyzes the oxidation of 5,10-methylenetetrahydrofolate to 5,10-methenyltetrahydrofolate and then the hydrolysis of 5,10-methenyltetrahydrofolate to 10-formyltetrahydrofolate. This Pelotomaculum thermopropionicum (strain DSM 13744 / JCM 10971 / SI) protein is Bifunctional protein FolD.